Consider the following 901-residue polypeptide: HTH-type transcriptional regulator MalT (901 aa).

39 to 46 (SPAGYGKT) lines the ATP pocket. The HTH luxR-type domain occupies 829–894 (ELIRTSPLTQ…AAVQHAQKLL (66 aa)). The H-T-H motif DNA-binding region spans 853 to 872 (NEQIAGELEVAATTIKTHIR).

It belongs to the MalT family. As to quaternary structure, monomer in solution. Oligomerizes to an active state in the presence of the positive effectors ATP and maltotriose.

With respect to regulation, activated by ATP and maltotriose, which are both required for DNA binding. Functionally, positively regulates the transcription of the maltose regulon whose gene products are responsible for uptake and catabolism of malto-oligosaccharides. Specifically binds to the promoter region of its target genes, recognizing a short DNA motif called the MalT box. The sequence is that of HTH-type transcriptional regulator MalT from Escherichia coli O45:K1 (strain S88 / ExPEC).